The primary structure comprises 159 residues: Allergen Arg r 1 (159 aa).

A signal peptide spans 1–16; it reads MALIILLVACLSVVSA. Disulfide bonds link Cys50–Cys155 and Cys109–Cys134.

The protein belongs to the calycin superfamily. Histamine-binding salivary protein family. In terms of processing, not glycosylated.

The protein resides in the secreted. The protein is Allergen Arg r 1 of Argas reflexus (European pigeon tick).